Here is a 469-residue protein sequence, read N- to C-terminus: Glutamate--tRNA ligase 2 (469 aa).

The 'HIGH' region signature appears at 8-18 (PSPTGFLHVGG). The short motif at 250–254 (KLSKR) is the 'KMSKS' region element. K253 is a binding site for ATP.

Belongs to the class-I aminoacyl-tRNA synthetase family. Glutamate--tRNA ligase type 1 subfamily. As to quaternary structure, monomer.

The protein localises to the cytoplasm. It carries out the reaction tRNA(Glu) + L-glutamate + ATP = L-glutamyl-tRNA(Glu) + AMP + diphosphate. Catalyzes the attachment of glutamate to tRNA(Glu) in a two-step reaction: glutamate is first activated by ATP to form Glu-AMP and then transferred to the acceptor end of tRNA(Glu). This is Glutamate--tRNA ligase 2 from Thermotoga sp. (strain RQ2).